The chain runs to 262 residues: Small ribosomal subunit protein eS4y (262 aa).

Residues 42 to 104 (LPLVLIIRNR…TNENFRLLYD (63 aa)) enclose the S4 RNA-binding domain.

This sequence belongs to the eukaryotic ribosomal protein eS4 family.

Its subcellular location is the cytoplasm. The sequence is that of Small ribosomal subunit protein eS4y (RPS4B) from Arabidopsis thaliana (Mouse-ear cress).